Here is an 885-residue protein sequence, read N- to C-terminus: Ankyrin repeat and SAM domain-containing protein 6 (885 aa).

ANK repeat units lie at residues 8 to 37, 68 to 97, 101 to 130, 134 to 163, 181 to 210, 215 to 244, 282 to 312, 316 to 345, 350 to 379, and 383 to 414; these read PGLQ…EPVA, AGNS…SVNS, YGWS…DVNA, LGAS…TVDH, LGIT…DPNH, VGWS…NPDH, KRRP…HVNL, DGAT…DMNK, HGWT…DVTL, and NGYT…QVNK. Asparagine 129 carries the post-translational modification 3-hydroxyasparagine. 4 disordered regions span residues 415–439, 491–522, 563–775, and 855–885; these read DRGG…SIPM, MRAP…PRRE, SSDR…ITDE, and FESS…SSRR. Residues 608–640 show a composition bias toward low complexity; the sequence is PSISRSPTSPASSGNFNHSPHSSGGASGVGSMS. Serine 650 is modified (phosphoserine). The segment covering 650-662 has biased composition (polar residues); it reads SGGSVDSVLSQIA. Low complexity-rich tracts occupy residues 689–713 and 722–739; these read GSSP…TSSS and PPSG…TLTP. 2 positions are modified to phosphoserine: serine 734 and serine 742. The span at 750–770 shows a compositional bias: low complexity; sequence SSVSSSSSHRQSKSSGGSSSG. An SAM domain is found at 773 to 836; the sequence is TDEDELTGIL…LAAISELNAG (64 aa). Positions 855–865 are enriched in polar residues; that stretch reads FESSASNTRAP. Residues 876 to 885 show a composition bias toward basic and acidic residues; the sequence is RPEETVSSRR.

Homooligomer. Interacts with NEK8. Central component of a complex containing at least ANKS6, INVS, NEK8 and NPHP3. ANKS6 may organize complex assembly by linking INVS and NPHP3 to NEK8 and INVS may target the complex to the proximal ciliary axoneme. Interacts (via SAM domain) with BICC1 (via KH domains) in an RNA-dependent manner. Interacts (via SAM domain) with ANKS3 (via SAM domain). Post-translationally, hydroxylated at Asn-129, most probably by HIF1AN. This hydroxylation results in decreased NEK8-binding. In terms of tissue distribution, widely expressed with moderate level in brain, skeletal muscle and testis. Expressed in renal tubules.

It localises to the cell projection. The protein resides in the cilium. The protein localises to the cytoplasm. In terms of biological role, required for renal function. The chain is Ankyrin repeat and SAM domain-containing protein 6 (Anks6) from Rattus norvegicus (Rat).